A 493-amino-acid polypeptide reads, in one-letter code: UDP-N-acetylmuramoyl-L-alanyl-D-glutamate--2,6-diaminopimelate ligase (493 aa).

The UDP-N-acetyl-alpha-D-muramoyl-L-alanyl-D-glutamate site is built by leucine 30 and serine 32. Residue 117-123 (GTNGKTT) coordinates ATP. UDP-N-acetyl-alpha-D-muramoyl-L-alanyl-D-glutamate-binding positions include asparagine 158, 159–160 (TT), serine 186, glutamine 192, and arginine 194. An N6-carboxylysine modification is found at lysine 226. Residues arginine 388, 412 to 415 (DNPR), glycine 463, and glutamate 467 contribute to the meso-2,6-diaminopimelate site. The Meso-diaminopimelate recognition motif signature appears at 412–415 (DNPR).

The protein belongs to the MurCDEF family. MurE subfamily. Mg(2+) serves as cofactor. Post-translationally, carboxylation is probably crucial for Mg(2+) binding and, consequently, for the gamma-phosphate positioning of ATP.

The protein localises to the cytoplasm. The enzyme catalyses UDP-N-acetyl-alpha-D-muramoyl-L-alanyl-D-glutamate + meso-2,6-diaminopimelate + ATP = UDP-N-acetyl-alpha-D-muramoyl-L-alanyl-gamma-D-glutamyl-meso-2,6-diaminopimelate + ADP + phosphate + H(+). Its pathway is cell wall biogenesis; peptidoglycan biosynthesis. Its function is as follows. Catalyzes the addition of meso-diaminopimelic acid to the nucleotide precursor UDP-N-acetylmuramoyl-L-alanyl-D-glutamate (UMAG) in the biosynthesis of bacterial cell-wall peptidoglycan. This is UDP-N-acetylmuramoyl-L-alanyl-D-glutamate--2,6-diaminopimelate ligase from Vibrio vulnificus (strain YJ016).